Here is a 338-residue protein sequence, read N- to C-terminus: RNA 3'-terminal phosphate cyclase (338 aa).

ATP-binding positions include Gln-103 and 283 to 287; that span reads YLADQ. The active-site Tele-AMP-histidine intermediate is His-308.

The protein belongs to the RNA 3'-terminal cyclase family. Type 1 subfamily.

It localises to the cytoplasm. The catalysed reaction is a 3'-end 3'-phospho-ribonucleotide-RNA + ATP = a 3'-end 2',3'-cyclophospho-ribonucleotide-RNA + AMP + diphosphate. Catalyzes the conversion of 3'-phosphate to a 2',3'-cyclic phosphodiester at the end of RNA. The mechanism of action of the enzyme occurs in 3 steps: (A) adenylation of the enzyme by ATP; (B) transfer of adenylate to an RNA-N3'P to produce RNA-N3'PP5'A; (C) and attack of the adjacent 2'-hydroxyl on the 3'-phosphorus in the diester linkage to produce the cyclic end product. The biological role of this enzyme is unknown but it is likely to function in some aspects of cellular RNA processing. This is RNA 3'-terminal phosphate cyclase from Escherichia coli O6:K15:H31 (strain 536 / UPEC).